A 673-amino-acid polypeptide reads, in one-letter code: MSEILDLSFLSEMERDLILGVLQRDEELRKADEKRIRRLKNELLEIKRKGAKRGSQHYSDRTCARCQEGLGRLIPKSSTCVGCNHLVCRECRVLESNGSWRCKVCSKEIELKKATGDWFYDQKVNRFDYRTGSEIIRMSLRQKPAVNKRETAGQSLLQQTQMGDIWPGRRIIQEQQQREQSVLFEVPKTRSGKSALEAESESLDSYTADSDSTSRRDSLDKSGLFPEWKKMSAPKSQVEKEIPPGNQNAVCGDEGDMVFKKNTKKVLRPSEYTKSVIDLRPEDVAQESGILGDRSKSVPGLSVDMEEEEEEEEDIDHLVKLHRQKLARGSMQSGSSMSTLGSIMSIYSEAGDFGNISVTGKIAFSLKFEQKTQTLVIHVKECHQLAYADEAKKRSNPYVKTYLLPDKSRQGKRKTSIKRDTINPLYDETFRYEISESLLAQRTLQFSVWHHGRFGRNTFLGEAEVHMDSWKLDKKLDHCLPLHGKISTESSPGLPAHKGELVVSLKYIPASKLPVGGDRKKSKGGEGGELQVWIKEAKNLTAAKSGGTSDSFVKGYLLPMRNKASKRKTPVMKKTLSPHYNHTFVYNGVRLEDLQHMCLELTVWDREPLASNDFLGGVRLGVGTGISNGEVVDWMDSTGEEVSLWQKMRQYPGSWAEGTLQLRSSMVKQKLGV.

A RabBD domain is found at 4–122 (ILDLSFLSEM…KATGDWFYDQ (119 aa)). The FYVE-type zinc finger occupies 63 to 105 (CARCQEGLGRLIPKSSTCVGCNHLVCRECRVLESNGSWRCKVC). Positions 184 to 253 (FEVPKTRSGK…PGNQNAVCGD (70 aa)) are disordered. Phosphoserine occurs at positions 202, 205, 218, 222, and 275. The C2 1 domain occupies 358 to 480 (VTGKIAFSLK…KLDKKLDHCL (123 aa)). A Phosphoserine modification is found at Ser490. In terms of domain architecture, C2 2 spans 509–635 (PASKLPVGGD…ISNGEVVDWM (127 aa)).

In terms of assembly, part of a ternary complex containing STX1A and RAB27A. Can bind both dominant negative and dominant active mutants of RAB27A. Binds STXBP1, RAB3A, RAB8A and RAB27B. Interacts with MYO5A. Detected in the pancreatic islet, in particular in insulin-positive beta cells, and in pituitary.

The protein resides in the membrane. It is found in the cytoplasmic vesicle. The protein localises to the secretory vesicle membrane. Functionally, modulates exocytosis of dense-core granules and secretion of hormones in the pancreas and the pituitary. Interacts with vesicles containing negatively charged phospholipids in a Ca(2+)-independent manner. The sequence is that of Synaptotagmin-like protein 4 (Sytl4) from Mus musculus (Mouse).